The following is a 478-amino-acid chain: Ribosomal RNA small subunit methyltransferase F (478 aa).

Residues 121-127 (ASAPGSK), Glu-145, Asp-172, and Asp-190 contribute to the S-adenosyl-L-methionine site. The active-site Nucleophile is the Cys-243.

It belongs to the class I-like SAM-binding methyltransferase superfamily. RsmB/NOP family.

It is found in the cytoplasm. It catalyses the reaction cytidine(1407) in 16S rRNA + S-adenosyl-L-methionine = 5-methylcytidine(1407) in 16S rRNA + S-adenosyl-L-homocysteine + H(+). Specifically methylates the cytosine at position 1407 (m5C1407) of 16S rRNA. This chain is Ribosomal RNA small subunit methyltransferase F, found in Shewanella sediminis (strain HAW-EB3).